Here is a 26-residue protein sequence, read N- to C-terminus: Oxyopinin-3a (26 aa).

Expressed by the venom gland.

Its subcellular location is the secreted. May have cytolytic and antimicrobial activity. This Oxyopes takobius (Lynx spider) protein is Oxyopinin-3a.